The chain runs to 528 residues: Glucose transporter 1E (528 aa).

Residues 1–22 (MTERRDNVSHAPDAIEGPNDGA) form a disordered region. The Cytoplasmic segment spans residues 1–43 (MTERRDNVSHAPDAIEGPNDGAHAEETSPGFFSFENLGVAQVQ). The helical transmembrane segment at 44 to 64 (VVGGTLNGYVIGYVAVYLLLY) threads the bilayer. Over 65–118 (LTATECKFTTEGACGGRKIYGCKWSGTTCKFENPKCSEGSDPSDSCKNEVAYTS) the chain is Extracellular. A helical transmembrane segment spans residues 119-139 (VYSGIFACAMIVGSMVGSIIA). At 140–151 (GKCITTFGLKKS) the chain is on the cytoplasmic side. The chain crosses the membrane as a helical span at residues 152–172 (FIIVSITCTIACVVVQVAIEY). At 173–175 (NNY) the chain is on the extracellular side. A helical membrane pass occupies residues 176 to 196 (YALCTGRVLIGLGVGILCSVF). The Cytoplasmic portion of the chain corresponds to 197–213 (PMYVNENAHPKLCKMDG). Residues 214-234 (VLFQVFTTLGIMLAAMLGLIL) form a helical membrane-spanning segment. Residues 235–250 (DKTGASKEEANMAGRL) are Extracellular-facing. The helical transmembrane segment at 251–271 (HVFSAVPLGLSVAMFLVGMFL) threads the bilayer. The Cytoplasmic segment spans residues 272 to 301 (RESTATFAQDDDGKADGGMDPNEYGWGQML). A helical transmembrane segment spans residues 302–322 (WPLFMGAVTAGTLQLTGINAV). The Extracellular portion of the chain corresponds to 323 to 338 (MNYAPKITENLGMDPS). The helical transmembrane segment at 339 to 359 (LGNFLVMAWNFVTSLVAIPLA) threads the bilayer. Topologically, residues 360–367 (SRFTMRQM) are cytoplasmic. The chain crosses the membrane as a helical span at residues 368–388 (FITCSFVASCMCLFLCGIPVF). Over 389 to 403 (PGVAEEKVKNGVATT) the chain is Extracellular. A helical membrane pass occupies residues 404–424 (GIALFIAAFEFGVGSCFFVLA). Residues 425-438 (QDLFPPSFRPKGSS) lie on the Cytoplasmic side of the membrane. A helical transmembrane segment spans residues 439–459 (FVVMMQFIFNILINLLYPITT). The Extracellular segment spans residues 460 to 475 (EAISGGATGDQDKGQA). A helical membrane pass occupies residues 476–496 (VVFILFGLIGLICFVLQFFYL). Over 497–528 (YPYDANQDHENDHGTEPVERILSPVDVPTPRN) the chain is Cytoplasmic. The disordered stretch occupies residues 507 to 528 (NDHGTEPVERILSPVDVPTPRN).

Belongs to the major facilitator superfamily. Sugar transporter (TC 2.A.1.1) family.

The protein resides in the membrane. In terms of biological role, facilitative glucose transporter. The polypeptide is Glucose transporter 1E (THT1E) (Trypanosoma brucei brucei).